The sequence spans 521 residues: Glucose-1-phosphate adenylyltransferase large subunit 2, chloroplastic/amyloplastic (521 aa).

A chloroplast-targeting transit peptide spans 1–47 (MQFSSVLPLEGKACMSPVRRGSGGYGSERMRINCCSIRRNKALRRMC).

This sequence belongs to the bacterial/plant glucose-1-phosphate adenylyltransferase family. Heterotetramer. In terms of tissue distribution, abundant in the embryo and is also present in the endosperm.

It localises to the plastid. It is found in the chloroplast. The protein resides in the amyloplast. The enzyme catalyses alpha-D-glucose 1-phosphate + ATP + H(+) = ADP-alpha-D-glucose + diphosphate. Its pathway is glycan biosynthesis; starch biosynthesis. Activated by 3'phosphoglycerate, inhibited by orthophosphate. Allosteric regulation. Functionally, this protein plays a role in synthesis of starch. It catalyzes the synthesis of the activated glycosyl donor, ADP-glucose from Glc-1-P and ATP. In Zea mays (Maize), this protein is Glucose-1-phosphate adenylyltransferase large subunit 2, chloroplastic/amyloplastic (AGP2).